The primary structure comprises 142 residues: Transcriptional regulator MraZ (142 aa).

SpoVT-AbrB domains lie at 5 to 47 and 76 to 119; these read RFTH…PMDS and ATVV…SPEN.

It belongs to the MraZ family. As to quaternary structure, forms oligomers.

The protein localises to the cytoplasm. It is found in the nucleoid. The sequence is that of Transcriptional regulator MraZ from Thermomicrobium roseum (strain ATCC 27502 / DSM 5159 / P-2).